Consider the following 132-residue polypeptide: UPF0299 membrane protein CKO_00648 (132 aa).

A run of 4 helical transmembrane segments spans residues 7–27 (IIWQ…AGIF), 31–51 (LLPI…VLLA), 63–83 (GCYV…VGVM), and 93–113 (FGPV…VVSW).

It belongs to the UPF0299 family.

It is found in the cell inner membrane. In Citrobacter koseri (strain ATCC BAA-895 / CDC 4225-83 / SGSC4696), this protein is UPF0299 membrane protein CKO_00648.